Here is a 99-residue protein sequence, read N- to C-terminus: Nucleoid-associated protein SAG1747 (99 aa).

Over residues 1-10 the composition is skewed to low complexity; sequence MMNMQNMMRQ. The disordered stretch occupies residues 1–20; the sequence is MMNMQNMMRQAQKLQKQMEQ.

Belongs to the YbaB/EbfC family. Homodimer.

It is found in the cytoplasm. Its subcellular location is the nucleoid. Functionally, binds to DNA and alters its conformation. May be involved in regulation of gene expression, nucleoid organization and DNA protection. This chain is Nucleoid-associated protein SAG1747, found in Streptococcus agalactiae serotype V (strain ATCC BAA-611 / 2603 V/R).